The primary structure comprises 250 residues: Ribosomal RNA small subunit methyltransferase J (250 aa).

Residues 96 to 97 (RD) and D168 contribute to the S-adenosyl-L-methionine site.

It belongs to the methyltransferase superfamily. RsmJ family.

The protein resides in the cytoplasm. It catalyses the reaction guanosine(1516) in 16S rRNA + S-adenosyl-L-methionine = N(2)-methylguanosine(1516) in 16S rRNA + S-adenosyl-L-homocysteine + H(+). Its function is as follows. Specifically methylates the guanosine in position 1516 of 16S rRNA. The sequence is that of Ribosomal RNA small subunit methyltransferase J from Neisseria gonorrhoeae (strain ATCC 700825 / FA 1090).